A 185-amino-acid chain; its full sequence is Elongation factor P (185 aa).

It belongs to the elongation factor P family.

The protein localises to the cytoplasm. The protein operates within protein biosynthesis; polypeptide chain elongation. Functionally, involved in peptide bond synthesis. Stimulates efficient translation and peptide-bond synthesis on native or reconstituted 70S ribosomes in vitro. Probably functions indirectly by altering the affinity of the ribosome for aminoacyl-tRNA, thus increasing their reactivity as acceptors for peptidyl transferase. This Trichodesmium erythraeum (strain IMS101) protein is Elongation factor P.